Here is a 145-residue protein sequence, read N- to C-terminus: D-aminoacyl-tRNA deacylase (145 aa).

A Gly-cisPro motif, important for rejection of L-amino acids motif is present at residues 137–138 (GP).

The protein belongs to the DTD family. Homodimer.

It is found in the cytoplasm. The enzyme catalyses glycyl-tRNA(Ala) + H2O = tRNA(Ala) + glycine + H(+). It catalyses the reaction a D-aminoacyl-tRNA + H2O = a tRNA + a D-alpha-amino acid + H(+). An aminoacyl-tRNA editing enzyme that deacylates mischarged D-aminoacyl-tRNAs. Also deacylates mischarged glycyl-tRNA(Ala), protecting cells against glycine mischarging by AlaRS. Acts via tRNA-based rather than protein-based catalysis; rejects L-amino acids rather than detecting D-amino acids in the active site. By recycling D-aminoacyl-tRNA to D-amino acids and free tRNA molecules, this enzyme counteracts the toxicity associated with the formation of D-aminoacyl-tRNA entities in vivo and helps enforce protein L-homochirality. This chain is D-aminoacyl-tRNA deacylase, found in Shewanella amazonensis (strain ATCC BAA-1098 / SB2B).